We begin with the raw amino-acid sequence, 362 residues long: Flagellar P-ring protein (362 aa).

The first 15 residues, 1-15 (MLAAALMSAAFGAHA), serve as a signal peptide directing secretion.

It belongs to the FlgI family. As to quaternary structure, the basal body constitutes a major portion of the flagellar organelle and consists of four rings (L,P,S, and M) mounted on a central rod.

Its subcellular location is the periplasm. The protein localises to the bacterial flagellum basal body. In terms of biological role, assembles around the rod to form the L-ring and probably protects the motor/basal body from shearing forces during rotation. The chain is Flagellar P-ring protein from Pseudomonas fluorescens (strain Pf0-1).